A 791-amino-acid polypeptide reads, in one-letter code: Putative DNA (cytosine-5)-methyltransferase CMT1 (791 aa).

Residues 37-59 are disordered; sequence YQSKKTKLQAPTKKPANKGGKKE. The BAH domain occupies 79–199; that stretch reads VLINLNDDVY…VPYLNFTSAD (121 aa). Residues 225–768 form the SAM-dependent MTase C5-type domain; that stretch reads KFLLDLYSGC…YAFGMASQGL (544 aa). A coiled-coil region spans residues 308–333; the sequence is VESISELEDEEVEENDDIDEASTGAE. The Chromo domain occupies 339-404; sequence FEVEKFLGIM…DGFKSHLLPL (66 aa). Residue Cys-417 is part of the active site.

Belongs to the class I-like SAM-binding methyltransferase superfamily. C5-methyltransferase family. In terms of tissue distribution, expressed in flowers. Not detected in leaves, roots, seedlings and plants prior formation of flower buds.

It localises to the nucleus. It carries out the reaction a 2'-deoxycytidine in DNA + S-adenosyl-L-methionine = a 5-methyl-2'-deoxycytidine in DNA + S-adenosyl-L-homocysteine + H(+). May be involved in the CpXpG methylation and in gene silencing. The polypeptide is Putative DNA (cytosine-5)-methyltransferase CMT1 (CMT1) (Arabidopsis thaliana (Mouse-ear cress)).